The following is a 274-amino-acid chain: MDIVLLVKAAVMGIVEGLTEFLPISSTGHLILAGSLLGFDDDKAKVFDIAIQTGAIFAVILVYWQKIHSTVVALPRQAKARRLALNVVIGFLPAVVLGLLFGKMIKAHLFIPVVVASTFIIGGFIILWAEKRPPGSVRIEHVDDMTMWDALKVGLVQCFAMIPGTSRSGSTIIGGMLLGLSRQAATDFSFFLAIPTLIGAGAYSLYKERALLSVADIPLFSVGLVFSFISAWLCVRWLLKYISTHDFIPFAWYRIAFGIVVLATAWTGTVVWAE.

Helical transmembrane passes span 44 to 64 (AKVF…LVYW), 85 to 105 (LNVV…GKMI), 109 to 129 (LFIP…ILWA), 185 to 205 (ATDF…AYSL), 214 to 234 (VADI…AWLC), and 247 to 267 (FIPF…TAWT).

It belongs to the UppP family.

The protein resides in the cell inner membrane. The catalysed reaction is di-trans,octa-cis-undecaprenyl diphosphate + H2O = di-trans,octa-cis-undecaprenyl phosphate + phosphate + H(+). Catalyzes the dephosphorylation of undecaprenyl diphosphate (UPP). Confers resistance to bacitracin. The protein is Undecaprenyl-diphosphatase of Variovorax paradoxus (strain S110).